The sequence spans 166 residues: Large ribosomal subunit protein uL11x (166 aa).

The protein belongs to the universal ribosomal protein uL11 family.

Binds directly to 26S ribosomal RNA. This chain is Large ribosomal subunit protein uL11x (RPL12C), found in Arabidopsis thaliana (Mouse-ear cress).